A 953-amino-acid polypeptide reads, in one-letter code: Trafficking kinesin-binding protein 1 (953 aa).

The HAP1 N-terminal domain occupies 47-354 (LEEQLPHYKL…EELKNLRNKT (308 aa)). A coiled-coil region spans residues 104-356 (QMTKTYNDID…LKNLRNKTMP (253 aa)). The interaction with HGS stretch occupies residues 359 to 509 (TSRRYHSLGL…RRLSLRRENY (151 aa)). The O-linked (GlcNAc) serine glycan is linked to S447. The tract at residues 472–495 (AADLGNDERSKKPGTPGTPGSHDL) is disordered. Positions 492 to 532 (SHDLETALRRLSLRRENYLSERRFFEEEQERKLQELAEKGE) form a coiled coil. S537 is modified (phosphoserine). The tract at residues 658–672 (PGKCMSQTNSTFTFT) is interaction with OGT. O-linked (GlcNAc) serine glycosylation is found at S680 and S719. S719 is modified (phosphoserine). The disordered stretch occupies residues 777 to 796 (VIPSTPPNSPMQTPTSSPPS). Over residues 786 to 796 (PMQTPTSSPPS) the composition is skewed to low complexity. S919 is modified (phosphoserine). T935 carries O-linked (GlcNAc) threonine glycosylation.

The protein belongs to the milton family. Interacts with RHOT1 and RHOT2. Found in a complex with KIF5B, OGT, RHOT1 and RHOT2. Interacts with HGS. Interacts with GABRA1. Interacts with KIF5C. Interacts with OGT; stable interaction is not required for glycosylation of this protein by OGT. Isoform 1 interacts with OGT. Post-translationally, O-glycosylated. Glycosylated by OGT; glycosylation in response to increased extracellular glucose levels is required for and leads to regulation of mitochondrial motility by OGT. In terms of tissue distribution, high expression in spinal cord and moderate expression in all other tissues and specific brain regions examined. Expressed in all cell lines examined.

It is found in the cytoplasm. Its subcellular location is the nucleus. The protein resides in the mitochondrion. It localises to the early endosome. The protein localises to the endosome. It is found in the mitochondrion membrane. Its subcellular location is the cell cortex. In terms of biological role, involved in the regulation of endosome-to-lysosome trafficking, including endocytic trafficking of EGF-EGFR complexes and GABA-A receptors. Involved in mitochondrial motility. When O-glycosylated, abolishes mitochondrial motility. Crucial for recruiting OGT to the mitochondrial surface of neuronal processes. TRAK1 and RHOT form an essential protein complex that links KIF5 to mitochondria for light chain-independent, anterograde transport of mitochondria. The chain is Trafficking kinesin-binding protein 1 (TRAK1) from Homo sapiens (Human).